Reading from the N-terminus, the 118-residue chain is MKNRYIQQFEDAQLKDKTMPIFKAGDTLKLGITIKEGEKTRTQYFEGVCIAIRGNGVDKTFCVRKIGANNIGVEKIFPFYSESLASVEVLRVGRVRRAKLYYLRDRRGKAARIKEVRH.

It belongs to the bacterial ribosomal protein bL19 family.

Its function is as follows. This protein is located at the 30S-50S ribosomal subunit interface and may play a role in the structure and function of the aminoacyl-tRNA binding site. This is Large ribosomal subunit protein bL19 from Helicobacter pylori (strain P12).